Here is a 434-residue protein sequence, read N- to C-terminus: Gamma-glutamyl phosphate reductase (434 aa).

The protein belongs to the gamma-glutamyl phosphate reductase family.

It is found in the cytoplasm. It carries out the reaction L-glutamate 5-semialdehyde + phosphate + NADP(+) = L-glutamyl 5-phosphate + NADPH + H(+). Its pathway is amino-acid biosynthesis; L-proline biosynthesis; L-glutamate 5-semialdehyde from L-glutamate: step 2/2. In terms of biological role, catalyzes the NADPH-dependent reduction of L-glutamate 5-phosphate into L-glutamate 5-semialdehyde and phosphate. The product spontaneously undergoes cyclization to form 1-pyrroline-5-carboxylate. The protein is Gamma-glutamyl phosphate reductase of Pelotomaculum thermopropionicum (strain DSM 13744 / JCM 10971 / SI).